The chain runs to 917 residues: Protein translocase subunit SecA (917 aa).

Residues glutamine 87, 105-109 (GEGKT), and aspartate 516 contribute to the ATP site. Zn(2+)-binding residues include cysteine 901, cysteine 903, cysteine 912, and histidine 913.

Belongs to the SecA family. In terms of assembly, monomer and homodimer. Part of the essential Sec protein translocation apparatus which comprises SecA, SecYEG and auxiliary proteins SecDF-YajC and YidC. It depends on Zn(2+) as a cofactor.

Its subcellular location is the cell inner membrane. It localises to the cytoplasm. It carries out the reaction ATP + H2O + cellular proteinSide 1 = ADP + phosphate + cellular proteinSide 2.. Its function is as follows. Part of the Sec protein translocase complex. Interacts with the SecYEG preprotein conducting channel. Has a central role in coupling the hydrolysis of ATP to the transfer of proteins into and across the cell membrane, serving both as a receptor for the preprotein-SecB complex and as an ATP-driven molecular motor driving the stepwise translocation of polypeptide chains across the membrane. The protein is Protein translocase subunit SecA of Verminephrobacter eiseniae (strain EF01-2).